The following is a 108-amino-acid chain: Ig kappa chain V-V region MOPC 149 (108 aa).

A framework-1 region spans residues 1-23 (DIQMTQSPDYLSASVGETVTITC). Cys-23 and Cys-88 are joined by a disulfide. The interval 24 to 34 (RASENIYSYLA) is complementarity-determining-1. The segment at 35-49 (WYQQKQGKSPQLLVY) is framework-2. The interval 50–56 (DAKTLVE) is complementarity-determining-2. A framework-3 region spans residues 57-88 (GVPSRFSGSGSGTQFSLKINSLQPEDFGSYYC). Positions 89–97 (QHHYGIPFT) are complementarity-determining-3. Positions 98 to 108 (FGSGTKLEIKR) are framework-4.

The protein is Ig kappa chain V-V region MOPC 149 of Mus musculus (Mouse).